We begin with the raw amino-acid sequence, 1032 residues long: MAETNNECSIKVLCRFRPLNQAEILRGDKFIPIFQGDDSVVIGGKPYVFDRVFPPNTTQEQVYHACAMQIVKDVLAGYNGTIFAYGQTSSGKTHTMEGKLHDPQLMGIIPRIARDIFNHIYSMDENLEFHIKVSYFEIYLDKIRDLLDVTKTNLSVHEDKNRVPFVKGCTERFVSGPEEILDVIDEGKSNRHVAVTNMNEHSSRSHSIFLINIKQENMETEQKLSGKLYLVDLAGSEKVSKTGAEGAVLDEAKNINKSLSALGNVISALAEGTKSYVPYRDSKMTRILQDSLGGNCRTTMFICCSPSSYNDAETKSTLMFGQRAKTIKNTASVNLELTAEQWKKKYEKEKEKTKAQKETIAKLEAELSRWRNGENVPETERLAGEEAALGAELCEETPVNDNSSIVVRIAPEERQKYEEEIRRLYKQLDDKDDEINQQSQLIEKLKQQMLDQEELLVSTRGDNEKVQQELSHLQSENDAAKDEVKEVLQALEELAVNYDQKSQEVEEKSQQNQLLVDELSQKVATMLSLESELQRLQEVSGHQRKRIAEVLNGLMKDLSEFSVIVGNGEIKLPVEISGAIEEEFTVARLYISKIKSEVKSVVKRCRQLENLQVERHRKMEVTGRELSSCQLLISQHEAKIRSLTEYMQSVELKKRHLEESYDSLSDELAKLQAQETVHEVALKDKEPDTQDADEVKKALELQMESHREAHHRQLARLRDEINEKQKTIDELKDLNQKLQLELEKLQADYEKLKSEEHEKSTKLQELTFLYERHEQSKQDLKGLEETVARELQTLHNLRKLFVQDVTTRVKKSAEMEPEDSGGIHSQKQKISFLENNLEQLTKVHKQLVRDNADLRCELPKLEKRLRATAERVKALEGALKEAKEGAMKDKRRYQQEVDRIKEAVRYKSSGKRGHSAQIAKPVRPGHYPASSPTNPYGTRSPECISYTNSLFQNYQNLYLQATPSSTSDMYFANSCTGSGATSSGGPLASYQKANMDNGNATDIKDNRSDLPCGYEAEDQAKLFPLHQETAAS.

Ala-2 carries the N-acetylalanine modification. The Kinesin motor domain occupies 9 to 327 (SIKVLCRFRP…LMFGQRAKTI (319 aa)). An ATP-binding site is contributed by 86 to 93 (GQTSSGKT). The tract at residues 174 to 315 (VSGPEEILDV…PSSYNDAETK (142 aa)) is microtubule-binding. The segment at 271 to 361 (EGTKSYVPYR…KTKAQKETIA (91 aa)) is necessary for interaction with ZFYVE27. Residues 331–906 (ASVNLELTAE…VDRIKEAVRY (576 aa)) are a coiled coil. The interaction with BICD2 stretch occupies residues 353 to 1032 (TKAQKETIAK…FPLHQETAAS (680 aa)). Thr-397 is modified (phosphothreonine). The disordered stretch occupies residues 904–939 (VRYKSSGKRGHSAQIAKPVRPGHYPASSPTNPYGTR). The globular stretch occupies residues 907-1032 (KSSGKRGHSA…FPLHQETAAS (126 aa)).

It belongs to the TRAFAC class myosin-kinesin ATPase superfamily. Kinesin family. Kinesin subfamily. In terms of assembly, oligomer composed of two heavy chains and two light chains. Interacts with GRIP1. Interacts with FMR1 (via C-terminus); this interaction is increased in a mGluR-dependent manner. Interacts with BORCS5. Interacts with ZFYVE27. Interacts with VAPA, VAPB, SURF4, RAB11A (GDP-bound form), RAB11B (GDP-bound form) and RTN3 in a ZFYVE27-dependent manner. Interacts with BICD2. Interacts with DTNB.

Its subcellular location is the cytoplasm. It localises to the perinuclear region. It is found in the cytoskeleton. The protein localises to the perikaryon. The catalysed reaction is ATP + H2O + a kinesin associated with a microtubule at position (n) = ADP + phosphate a kinesin associated with a microtubule at position (n+1, toward the plus end).. Microtubule-dependent motor required for slow axonal transport of neurofilament proteins (NFH, NFM and NFL). Can induce formation of neurite-like membrane protrusions in non-neuronal cells in a ZFYVE27-dependent manner. The ZFYVE27-KIF5A complex contributes to the vesicular transport of VAPA, VAPB, SURF4, RAB11A, RAB11B and RTN3 proteins in neurons. Required for anterograde axonal transportation of MAPK8IP3/JIP3 which is essential for MAPK8IP3/JIP3 function in axon elongation. This chain is Kinesin heavy chain isoform 5A (KIF5A), found in Pongo abelii (Sumatran orangutan).